Reading from the N-terminus, the 136-residue chain is Protein NrdI (136 aa).

It belongs to the NrdI family.

Probably involved in ribonucleotide reductase function. The protein is Protein NrdI of Salmonella newport (strain SL254).